A 157-amino-acid polypeptide reads, in one-letter code: Small ribosomal subunit protein uS7 (157 aa).

Belongs to the universal ribosomal protein uS7 family. In terms of assembly, part of the 30S ribosomal subunit. Contacts proteins S9 and S11.

Its function is as follows. One of the primary rRNA binding proteins, it binds directly to 16S rRNA where it nucleates assembly of the head domain of the 30S subunit. Is located at the subunit interface close to the decoding center, probably blocks exit of the E-site tRNA. This chain is Small ribosomal subunit protein uS7, found in Chlamydia trachomatis serovar A (strain ATCC VR-571B / DSM 19440 / HAR-13).